Here is a 162-residue protein sequence, read N- to C-terminus: NADH-quinone oxidoreductase subunit I (162 aa).

2 consecutive 4Fe-4S ferredoxin-type domains span residues 54 to 83 (RRYE…IESE) and 93 to 122 (TRYD…ETQI). The [4Fe-4S] cluster site is built by Cys-63, Cys-66, Cys-69, Cys-73, Cys-102, Cys-105, Cys-108, and Cys-112.

It belongs to the complex I 23 kDa subunit family. In terms of assembly, NDH-1 is composed of 14 different subunits. Subunits NuoA, H, J, K, L, M, N constitute the membrane sector of the complex. Requires [4Fe-4S] cluster as cofactor.

The protein resides in the cell inner membrane. It catalyses the reaction a quinone + NADH + 5 H(+)(in) = a quinol + NAD(+) + 4 H(+)(out). NDH-1 shuttles electrons from NADH, via FMN and iron-sulfur (Fe-S) centers, to quinones in the respiratory chain. The immediate electron acceptor for the enzyme in this species is believed to be ubiquinone. Couples the redox reaction to proton translocation (for every two electrons transferred, four hydrogen ions are translocated across the cytoplasmic membrane), and thus conserves the redox energy in a proton gradient. The sequence is that of NADH-quinone oxidoreductase subunit I from Burkholderia vietnamiensis (strain G4 / LMG 22486) (Burkholderia cepacia (strain R1808)).